We begin with the raw amino-acid sequence, 292 residues long: Phosphatidylserine decarboxylase proenzyme (292 aa).

Residues D89, H146, and S252 each act as charge relay system; for autoendoproteolytic cleavage activity in the active site. Residue S252 is the Schiff-base intermediate with substrate; via pyruvic acid; for decarboxylase activity of the active site. Pyruvic acid (Ser); by autocatalysis is present on S252.

The protein belongs to the phosphatidylserine decarboxylase family. PSD-B subfamily. Prokaryotic type I sub-subfamily. In terms of assembly, heterodimer of a large membrane-associated beta subunit and a small pyruvoyl-containing alpha subunit. Pyruvate is required as a cofactor. In terms of processing, is synthesized initially as an inactive proenzyme. Formation of the active enzyme involves a self-maturation process in which the active site pyruvoyl group is generated from an internal serine residue via an autocatalytic post-translational modification. Two non-identical subunits are generated from the proenzyme in this reaction, and the pyruvate is formed at the N-terminus of the alpha chain, which is derived from the carboxyl end of the proenzyme. The autoendoproteolytic cleavage occurs by a canonical serine protease mechanism, in which the side chain hydroxyl group of the serine supplies its oxygen atom to form the C-terminus of the beta chain, while the remainder of the serine residue undergoes an oxidative deamination to produce ammonia and the pyruvoyl prosthetic group on the alpha chain. During this reaction, the Ser that is part of the protease active site of the proenzyme becomes the pyruvoyl prosthetic group, which constitutes an essential element of the active site of the mature decarboxylase.

It localises to the cell membrane. It catalyses the reaction a 1,2-diacyl-sn-glycero-3-phospho-L-serine + H(+) = a 1,2-diacyl-sn-glycero-3-phosphoethanolamine + CO2. The protein operates within phospholipid metabolism; phosphatidylethanolamine biosynthesis; phosphatidylethanolamine from CDP-diacylglycerol: step 2/2. In terms of biological role, catalyzes the formation of phosphatidylethanolamine (PtdEtn) from phosphatidylserine (PtdSer). The polypeptide is Phosphatidylserine decarboxylase proenzyme (Shewanella sp. (strain MR-4)).